A 414-amino-acid polypeptide reads, in one-letter code: Collagenase (414 aa).

It belongs to the peptidase U32 family. As to quaternary structure, homodimer. A metal cation serves as cofactor.

Has collagenase activity. Hydrolyzes type I collagen. May play a role in virulence. The protein is Collagenase (prtC) of Porphyromonas gingivalis (strain ATCC BAA-308 / W83).